We begin with the raw amino-acid sequence, 184 residues long: Probable maltose O-acetyltransferase (184 aa).

An acetyl-CoA-binding site is contributed by Asn-84. The active-site Proton donor/acceptor is the His-114. Acetyl-CoA-binding positions include Gly-141, Ser-159, 164–165, Arg-179, and Lys-182; that span reads TK.

The protein belongs to the transferase hexapeptide repeat family. Homodimer.

It catalyses the reaction D-maltose + acetyl-CoA = 1-O-acetylmaltose + CoA. Its function is as follows. Catalyzes the CoA-dependent transfer of an acetyl group to maltose and other sugars. Acetylates glucose exclusively at the C6 position and maltose at the C6 position of the non-reducing end glucosyl moiety. Is able to acetylate maltooligosaccharides. This is Probable maltose O-acetyltransferase (maa) from Bacillus subtilis (strain 168).